We begin with the raw amino-acid sequence, 131 residues long: MPTIQQLVKSARQKLVNKTKAPALKSCPQRRGICLRVYTVTPKKPNSALRKVARVRLSSGFEVTAYIPGIGHNLQEHAVVLVRGGRVKDLPGVRYHIVRGTLDTAGVKGRVQGRSKYGVKKVSAKSAGKSK.

The protein belongs to the universal ribosomal protein uS12 family. In terms of assembly, part of the 30S ribosomal subunit.

The protein localises to the plastid. The protein resides in the chloroplast. In terms of biological role, with S4 and S5 plays an important role in translational accuracy. Located at the interface of the 30S and 50S subunits. The sequence is that of Small ribosomal subunit protein uS12c (rps12) from Stigeoclonium helveticum (Green alga).